The following is a 23-amino-acid chain: MVKIGINEFGRIGRLAFRRIYEL.

Belongs to the thymidine/pyrimidine-nucleoside phosphorylase family. Homodimer.

The enzyme catalyses thymidine + phosphate = 2-deoxy-alpha-D-ribose 1-phosphate + thymine. In terms of biological role, the enzymes which catalyze the reversible phosphorolysis of pyrimidine nucleosides are involved in the degradation of these compounds and in their utilization as carbon and energy sources, or in the rescue of pyrimidine bases for nucleotide synthesis. This is Thymidine phosphorylase (deoA) from Lacticaseibacillus rhamnosus (Lactobacillus rhamnosus).